The sequence spans 271 residues: NH(3)-dependent NAD(+) synthetase (271 aa).

An ATP-binding site is contributed by 43–50; sequence GISGGQDS. Asp-49 contributes to the Mg(2+) binding site. Arg-137 contacts deamido-NAD(+). Thr-157 lines the ATP pocket. Glu-162 is a binding site for Mg(2+). Lys-170 and Asp-177 together coordinate deamido-NAD(+). Positions 186 and 208 each coordinate ATP. 257 to 258 is a deamido-NAD(+) binding site; that stretch reads HK.

Belongs to the NAD synthetase family. As to quaternary structure, homodimer.

It catalyses the reaction deamido-NAD(+) + NH4(+) + ATP = AMP + diphosphate + NAD(+) + H(+). It participates in cofactor biosynthesis; NAD(+) biosynthesis; NAD(+) from deamido-NAD(+) (ammonia route): step 1/1. In terms of biological role, catalyzes the ATP-dependent amidation of deamido-NAD to form NAD. Uses ammonia as a nitrogen source. The polypeptide is NH(3)-dependent NAD(+) synthetase (Exiguobacterium sp. (strain ATCC BAA-1283 / AT1b)).